The chain runs to 367 residues: Apolipoprotein A-V (367 aa).

An N-terminal signal peptide occupies residues 1 to 20 (MVAVLTWALALLSAFATAQT). Serine 56 carries the post-translational modification Phosphoserine.

The protein belongs to the apolipoprotein A1/A4/E family. In terms of assembly, interacts with GPIHBP1. Interacts with SORL1; this interaction leads to APOA5 internalization and sorting either to lysosomes and degradation, or to the trans-Golgi network. Post-translationally, phosphorylated by FAM20C in the extracellular medium.

Its subcellular location is the secreted. The protein localises to the early endosome. It is found in the late endosome. The protein resides in the golgi apparatus. It localises to the trans-Golgi network. Functionally, minor apolipoprotein mainly associated with HDL and to a lesser extent with VLDL. May also be associated with chylomicrons. Important determinant of plasma triglyceride (TG) levels by both being a potent stimulator of apo-CII lipoprotein lipase (LPL) TG hydrolysis and an inhibitor of the hepatic VLDL-TG production rate (without affecting the VLDL-apoB production rate). Activates poorly lecithin:cholesterol acyltransferase (LCAT) and does not enhance efflux of cholesterol from macrophages. Binds heparin. The polypeptide is Apolipoprotein A-V (APOA5) (Phoca vitulina (Harbor seal)).